A 632-amino-acid polypeptide reads, in one-letter code: 2-hydroxyacyl-CoA lyase 2 (632 aa).

Residues 13 to 33 form a helical membrane-spanning segment; the sequence is LFPSFLLLACGTLVAALLGAA. A thiamine diphosphate-binding site is contributed by E98. The segment at 470–550 is thiamine pyrophosphate binding; it reads DFVGTAAHLV…VMALVGNDAG (81 aa). Residues D521 and N547 each contribute to the Mg(2+) site.

This sequence belongs to the TPP enzyme family. Requires Mg(2+) as cofactor. Thiamine diphosphate is required as a cofactor. Expressed in all tissues tested, with highest expression in heart, pancreas and placenta.

It localises to the endoplasmic reticulum membrane. It carries out the reaction 2-hydroxyoctadecanoyl-CoA = heptadecanal + formyl-CoA. The catalysed reaction is (2R)-hydroxyhexadecanoyl-CoA = pentadecanal + formyl-CoA. Endoplasmic reticulum 2-OH acyl-CoA lyase involved in the cleavage (C1 removal) reaction in the fatty acid alpha-oxydation in a thiamine pyrophosphate (TPP)-dependent manner. Involved in the phytosphingosine degradation pathway. This chain is 2-hydroxyacyl-CoA lyase 2, found in Homo sapiens (Human).